The primary structure comprises 337 residues: MQIVEQMKDKALAELNLVKDKKTLDDIRVKYLGKKGELTEMMKLIATLPNDEKPKLGQAVNIAKQALQEAINLKLANFEEQELNEKLAQEKIDITLSGVGQNQGSLHPVTKTLNRIEAFFKQNGFAIEFGPEIESDYYNFETLNIPSHHPARAMHDTFYIDETHVLRTHTSGVQIRTMEKQQPPIRIIAPGRVYRCDSDITHTPMFHQVEGLLVDKDVSFADLKGLLHAFLNSFFEKDLKVRFRPSYFPFTEPSAEADIECVMCDGKGCRVCKHTGWLEVLGCGMVHPKVLKAGNIDSEKYQGFAFGMGVERLSMLRYGIDDLRMFFENDLRFLKQF.

Mg(2+) is bound at residue Glu-252.

The protein belongs to the class-II aminoacyl-tRNA synthetase family. Phe-tRNA synthetase alpha subunit type 1 subfamily. As to quaternary structure, tetramer of two alpha and two beta subunits. Requires Mg(2+) as cofactor.

The protein localises to the cytoplasm. The enzyme catalyses tRNA(Phe) + L-phenylalanine + ATP = L-phenylalanyl-tRNA(Phe) + AMP + diphosphate + H(+). The chain is Phenylalanine--tRNA ligase alpha subunit from Francisella tularensis subsp. tularensis (strain SCHU S4 / Schu 4).